The chain runs to 740 residues: Ribosome-releasing factor 2, mitochondrial (740 aa).

The transit peptide at 1-29 (MLKYAWQSGPKQSNRWLWHLSNQIWKRSY) directs the protein to the mitochondrion. The 280-residue stretch at 31–310 (SKIRNIGILA…AVNAYLPAPE (280 aa)) folds into the tr-type G domain. Residues 40 to 47 (AHIDAGKT), 104 to 108 (DTPGH), and 158 to 161 (NKMD) each bind GTP.

The protein belongs to the TRAFAC class translation factor GTPase superfamily. Classic translation factor GTPase family. EF-G/EF-2 subfamily.

The protein localises to the mitochondrion. In terms of biological role, mitochondrial GTPase that mediates the disassembly of ribosomes from messenger RNA at the termination of mitochondrial protein biosynthesis. Not involved in the GTP-dependent ribosomal translocation step during translation elongation. The protein is Ribosome-releasing factor 2, mitochondrial of Drosophila melanogaster (Fruit fly).